A 328-amino-acid chain; its full sequence is D-cysteine desulfhydrase (328 aa).

Lys51 bears the N6-(pyridoxal phosphate)lysine mark.

The protein belongs to the ACC deaminase/D-cysteine desulfhydrase family. In terms of assembly, homodimer. Requires pyridoxal 5'-phosphate as cofactor.

It catalyses the reaction D-cysteine + H2O = hydrogen sulfide + pyruvate + NH4(+) + H(+). Functionally, catalyzes the alpha,beta-elimination reaction of D-cysteine and of several D-cysteine derivatives. It could be a defense mechanism against D-cysteine. The sequence is that of D-cysteine desulfhydrase from Shigella flexneri serotype 5b (strain 8401).